The primary structure comprises 319 residues: D-alanine--D-alanine ligase B (319 aa).

The ATP-grasp domain maps to 117 to 312 (KQVWQSLGPA…FQQLVLAILA (196 aa)). 143–198 (ATELGFPLIVKPAHEGSSIGMAKVNSVDELIAAWKAASTYDSQVLVEQWIQGPEFT) lines the ATP pocket. Mg(2+) is bound by residues aspartate 266, glutamate 279, and asparagine 281.

It belongs to the D-alanine--D-alanine ligase family. Requires Mg(2+) as cofactor. Mn(2+) serves as cofactor.

Its subcellular location is the cytoplasm. The enzyme catalyses 2 D-alanine + ATP = D-alanyl-D-alanine + ADP + phosphate + H(+). Its pathway is cell wall biogenesis; peptidoglycan biosynthesis. Functionally, cell wall formation. This is D-alanine--D-alanine ligase B from Pseudomonas syringae pv. tomato (strain ATCC BAA-871 / DC3000).